The following is a 517-amino-acid chain: GMP synthase [glutamine-hydrolyzing] (517 aa).

The region spanning Lys-11–Asn-202 is the Glutamine amidotransferase type-1 domain. Cys-88 serves as the catalytic Nucleophile. Catalysis depends on residues His-176 and Glu-178. The GMPS ATP-PPase domain maps to Trp-203–Arg-392. Residue Ser-230–Ser-236 coordinates ATP.

Homodimer.

The catalysed reaction is XMP + L-glutamine + ATP + H2O = GMP + L-glutamate + AMP + diphosphate + 2 H(+). Its pathway is purine metabolism; GMP biosynthesis; GMP from XMP (L-Gln route): step 1/1. Its function is as follows. Catalyzes the synthesis of GMP from XMP. This Latilactobacillus sakei subsp. sakei (strain 23K) (Lactobacillus sakei subsp. sakei) protein is GMP synthase [glutamine-hydrolyzing].